A 969-amino-acid chain; its full sequence is Vacuolar membrane protease (969 aa).

Residues 1 to 12 (MTRVNSIIGFRP) lie on the Cytoplasmic side of the membrane. Residues 13 to 33 (IPVTLLTVITYVSLFSALLFI) form a helical membrane-spanning segment. Residues 34–381 (DRQPPAVAKK…RAFSVLHLHT (348 aa)) lie on the Vacuolar side of the membrane. A glycan (N-linked (GlcNAc...) asparagine) is linked at N125. H166 and D178 together coordinate Zn(2+). E216 (proton acceptor) is an active-site residue. The Zn(2+) site is built by E217, E242, and H315. N355 is a glycosylation site (N-linked (GlcNAc...) asparagine). A helical membrane pass occupies residues 382-402 (IFAFTITLIVVPFVVVLVAMW). Over 403-438 (ALGHFDKLYFFSNTAYIPPPPEHSIASRTTQGWRGV) the chain is Cytoplasmic. The chain crosses the membrane as a helical span at residues 439-459 (LRFPVAFVAASAGVVGMAFLI). Residues 460–469 (NKINPMVVYA) are Vacuolar-facing. Residues 470–490 (SQYTVWTCFLSTWWIIAWVIL) traverse the membrane as a helical segment. Residues 491-505 (RGADAVRPTALARGY) are Cytoplasmic-facing. The helical transmembrane segment at 506-526 (GFLEQWLLWLVAMIGVAISIG) threads the bilayer. The Vacuolar segment spans residues 527–531 (KSHLG). The helical transmembrane segment at 532 to 552 (SGYWVLVFYSGFFTSAFISLL) threads the bilayer. Over 553 to 662 (EMAALQKKSE…WSKDLPSWTW (110 aa)) the chain is Cytoplasmic. The interval 571–629 (DQAYPPEEHSQTGASGNISNRAANDDDDAGEHATEETPLFRGPNRPLSFAPHRNPRYDN) is disordered. Residues 581–592 (QTGASGNISNRA) show a composition bias toward polar residues. Residues 663 to 683 (ILQFLATVPLQLVLAGSVALL) form a helical membrane-spanning segment. At 684 to 698 (LGNALAQTGADGSDM) the chain is on the vacuolar side. The helical transmembrane segment at 699 to 719 (LTVLLGFGVFSIILLLPVAPF) threads the bilayer. Topologically, residues 720–727 (LHRITYHV) are cytoplasmic. The chain crosses the membrane as a helical span at residues 728–748 (TLFIFVIFVGTFIYNLAAPPF). Residues 749–969 (SPNARLKVYF…LVEGSVPFMI (221 aa)) lie on the Vacuolar side of the membrane. N-linked (GlcNAc...) asparagine glycosylation occurs at N840.

This sequence belongs to the peptidase M28 family. Zn(2+) serves as cofactor.

It localises to the vacuole membrane. Functionally, may be involved in vacuolar sorting and osmoregulation. The sequence is that of Vacuolar membrane protease from Tuber melanosporum (strain Mel28) (Perigord black truffle).